The sequence spans 503 residues: uncharacterized protein (503 aa).

A coiled-coil region spans residues 437–465; that stretch reads LNKDLILENLIETENENDKQEFQKLLRTI.

Belongs to the IIV-6 467R family.

This is an uncharacterized protein from Invertebrate iridescent virus 6 (IIV-6).